Reading from the N-terminus, the 473-residue chain is 3-oxoacyl-[acyl-carrier-protein] synthase I, chloroplastic (473 aa).

Residues 1–10 (MQALQSSSLR) show a composition bias toward polar residues. The interval 1 to 26 (MQALQSSSLRASPPNPLRLPSNRQSH) is disordered. The N-terminal 46 residues, 1–46 (MQALQSSSLRASPPNPLRLPSNRQSHQLITNARPLRRQQRSFISAS), are a transit peptide targeting the chloroplast. The Ketosynthase family 3 (KS3) domain maps to 60-470 (KKRVVITGMG…GHNSVVAFSA (411 aa)). Residues cysteine 224, histidine 364, and histidine 400 each act as for beta-ketoacyl synthase activity in the active site.

It belongs to the thiolase-like superfamily. Beta-ketoacyl-ACP synthases family. In terms of assembly, homodimer.

The protein resides in the plastid. The protein localises to the chloroplast stroma. The catalysed reaction is a fatty acyl-[ACP] + malonyl-[ACP] + H(+) = a 3-oxoacyl-[ACP] + holo-[ACP] + CO2. Its function is as follows. Catalyzes the condensation reaction of fatty acid synthesis by the addition to an acyl acceptor of two carbons from malonyl-ACP. Specific for elongation from C-10 to unsaturated C-16 and C-18 fatty acids. The protein is 3-oxoacyl-[acyl-carrier-protein] synthase I, chloroplastic (KAS1) of Arabidopsis thaliana (Mouse-ear cress).